The primary structure comprises 388 residues: Phosphopentomutase (388 aa).

The Mn(2+) site is built by D10, D282, H287, D323, H324, and H335.

It belongs to the phosphopentomutase family. It depends on Mn(2+) as a cofactor.

The protein localises to the cytoplasm. The enzyme catalyses 2-deoxy-alpha-D-ribose 1-phosphate = 2-deoxy-D-ribose 5-phosphate. It catalyses the reaction alpha-D-ribose 1-phosphate = D-ribose 5-phosphate. It participates in carbohydrate degradation; 2-deoxy-D-ribose 1-phosphate degradation; D-glyceraldehyde 3-phosphate and acetaldehyde from 2-deoxy-alpha-D-ribose 1-phosphate: step 1/2. Functionally, isomerase that catalyzes the conversion of deoxy-ribose 1-phosphate (dRib-1-P) and ribose 1-phosphate (Rib-1-P) to deoxy-ribose 5-phosphate (dRib-5-P) and ribose 5-phosphate (Rib-5-P), respectively. In Carboxydothermus hydrogenoformans (strain ATCC BAA-161 / DSM 6008 / Z-2901), this protein is Phosphopentomutase.